Consider the following 316-residue polypeptide: Ribosomal RNA small subunit methyltransferase H (316 aa).

S-adenosyl-L-methionine contacts are provided by residues 39–41 (GGH), aspartate 56, phenylalanine 82, aspartate 103, and glutamine 110.

It belongs to the methyltransferase superfamily. RsmH family.

The protein localises to the cytoplasm. It catalyses the reaction cytidine(1402) in 16S rRNA + S-adenosyl-L-methionine = N(4)-methylcytidine(1402) in 16S rRNA + S-adenosyl-L-homocysteine + H(+). Specifically methylates the N4 position of cytidine in position 1402 (C1402) of 16S rRNA. In Methylacidiphilum infernorum (isolate V4) (Methylokorus infernorum (strain V4)), this protein is Ribosomal RNA small subunit methyltransferase H.